We begin with the raw amino-acid sequence, 140 residues long: ATP synthase epsilon chain, chloroplastic (140 aa).

This sequence belongs to the ATPase epsilon chain family. In terms of assembly, F-type ATPases have 2 components, CF(1) - the catalytic core - and CF(0) - the membrane proton channel. CF(1) has five subunits: alpha(3), beta(3), gamma(1), delta(1), epsilon(1). CF(0) has three main subunits: a, b and c.

It is found in the plastid. It localises to the chloroplast thylakoid membrane. Functionally, produces ATP from ADP in the presence of a proton gradient across the membrane. The chain is ATP synthase epsilon chain, chloroplastic from Panax ginseng (Korean ginseng).